We begin with the raw amino-acid sequence, 80 residues long: Cytochrome c-553 (80 aa).

Residues cysteine 13, cysteine 16, histidine 17, and methionine 58 each coordinate heme c.

Post-translationally, binds 1 heme c group covalently per subunit.

The protein localises to the periplasm. In terms of biological role, natural electron acceptor for a formate dehydrogenase. This Desulfomicrobium norvegicum (strain DSM 1741 / NCIMB 8310) (Desulfovibrio baculatus (strain Norway 4)) protein is Cytochrome c-553.